A 173-amino-acid chain; its full sequence is Large ribosomal subunit protein uL10 (173 aa).

Belongs to the universal ribosomal protein uL10 family. As to quaternary structure, part of the ribosomal stalk of the 50S ribosomal subunit. The N-terminus interacts with L11 and the large rRNA to form the base of the stalk. The C-terminus forms an elongated spine to which L12 dimers bind in a sequential fashion forming a multimeric L10(L12)X complex.

Forms part of the ribosomal stalk, playing a central role in the interaction of the ribosome with GTP-bound translation factors. The chain is Large ribosomal subunit protein uL10 from Cupriavidus pinatubonensis (strain JMP 134 / LMG 1197) (Cupriavidus necator (strain JMP 134)).